The primary structure comprises 763 residues: Protein CHROMATIN REMODELING 19 (763 aa).

Disordered regions lie at residues 1–43 and 114–149; these read MKRD…TPSI and EDEE…RGED. The span at 23 to 34 shows a compositional bias: basic residues; the sequence is VLKRPRTPKKTR. The span at 114-135 shows a compositional bias: acidic residues; sequence EDEEASDDDDDEAESSASEDEF. In terms of domain architecture, Helicase ATP-binding spans 226–404; that stretch reads LLYKKGIEGA…WSLLEFMLPD (179 aa). 239-246 contacts ATP; that stretch reads DEMGLGKT. A DEAH box motif is present at residues 353-356; that stretch reads DEAH. The stretch at 462 to 482 forms a coiled coil; it reads RKQEDAYKEAIEEYRAASQAR. A Nuclear localization signal motif is present at residues 520–527; the sequence is IRRIYSDE. The region spanning 592–742 is the Helicase C-terminal domain; it reads TLAELLPSMK…AAVLESGVHV (151 aa).

Belongs to the SNF2/RAD54 helicase family. Interacts with SUVR2 and itself.

The protein resides in the nucleus. DNA helicase that possesses intrinsic ATP-dependent nucleosome-remodeling activity and is both required for DNA repair and heterochromatin organization. Promotes DNA end resection of double-strand breaks (DSBs) following DNA damage: probably acts by weakening histone DNA interactions in nucleosomes flanking DSBs. Probable chromatin remodeling factor. Probable helicase-like transcription factor involved in transcriptional gene silencing. Associates with SUVR2 and contributes to transcriptional gene silencing at RNA-directed DNA methylation (RdDM) target loci but also at RdDM-independent target loci. May be involved in nucleosome positioning to form ordered nucleosome arrays on chromatin. This is Protein CHROMATIN REMODELING 19 from Arabidopsis thaliana (Mouse-ear cress).